Here is a 1063-residue protein sequence, read N- to C-terminus: NAD-specific glutamate dehydrogenase (1063 aa).

The protein belongs to the Glu/Leu/Phe/Val dehydrogenases family. Highly divergent. Homotetramer.

It catalyses the reaction L-glutamate + NAD(+) + H2O = 2-oxoglutarate + NH4(+) + NADH + H(+). Allosterically activated by NADP(+). This is NAD-specific glutamate dehydrogenase from Achlya klebsiana.